The sequence spans 312 residues: Formimidoylglutamase (312 aa).

Mn(2+)-binding residues include histidine 128, aspartate 153, histidine 155, aspartate 157, aspartate 240, and aspartate 242.

Belongs to the arginase family. The cofactor is Mn(2+).

The catalysed reaction is N-formimidoyl-L-glutamate + H2O = formamide + L-glutamate. Its pathway is amino-acid degradation; L-histidine degradation into L-glutamate; L-glutamate from N-formimidoyl-L-glutamate (hydrolase route): step 1/1. Functionally, catalyzes the conversion of N-formimidoyl-L-glutamate to L-glutamate and formamide. The chain is Formimidoylglutamase from Enterobacter sp. (strain 638).